The chain runs to 317 residues: 4-hydroxy-3-methylbut-2-enyl diphosphate reductase (317 aa).

Residue cysteine 12 coordinates [4Fe-4S] cluster. 2 residues coordinate (2E)-4-hydroxy-3-methylbut-2-enyl diphosphate: histidine 41 and histidine 74. Residues histidine 41 and histidine 74 each contribute to the dimethylallyl diphosphate site. Isopentenyl diphosphate is bound by residues histidine 41 and histidine 74. Cysteine 97 provides a ligand contact to [4Fe-4S] cluster. A (2E)-4-hydroxy-3-methylbut-2-enyl diphosphate-binding site is contributed by histidine 125. Histidine 125 is a dimethylallyl diphosphate binding site. Isopentenyl diphosphate is bound at residue histidine 125. Glutamate 127 functions as the Proton donor in the catalytic mechanism. Threonine 168 contacts (2E)-4-hydroxy-3-methylbut-2-enyl diphosphate. Cysteine 198 contributes to the [4Fe-4S] cluster binding site. (2E)-4-hydroxy-3-methylbut-2-enyl diphosphate contacts are provided by serine 226, serine 227, asparagine 228, and serine 270. Serine 226, serine 227, asparagine 228, and serine 270 together coordinate dimethylallyl diphosphate. Isopentenyl diphosphate contacts are provided by serine 226, serine 227, asparagine 228, and serine 270.

Belongs to the IspH family. As to quaternary structure, homodimer. [4Fe-4S] cluster serves as cofactor.

It carries out the reaction isopentenyl diphosphate + 2 oxidized [2Fe-2S]-[ferredoxin] + H2O = (2E)-4-hydroxy-3-methylbut-2-enyl diphosphate + 2 reduced [2Fe-2S]-[ferredoxin] + 2 H(+). The catalysed reaction is dimethylallyl diphosphate + 2 oxidized [2Fe-2S]-[ferredoxin] + H2O = (2E)-4-hydroxy-3-methylbut-2-enyl diphosphate + 2 reduced [2Fe-2S]-[ferredoxin] + 2 H(+). It participates in isoprenoid biosynthesis; dimethylallyl diphosphate biosynthesis; dimethylallyl diphosphate from (2E)-4-hydroxy-3-methylbutenyl diphosphate: step 1/1. Its pathway is isoprenoid biosynthesis; isopentenyl diphosphate biosynthesis via DXP pathway; isopentenyl diphosphate from 1-deoxy-D-xylulose 5-phosphate: step 6/6. Functionally, catalyzes the conversion of 1-hydroxy-2-methyl-2-(E)-butenyl 4-diphosphate (HMBPP) into a mixture of isopentenyl diphosphate (IPP) and dimethylallyl diphosphate (DMAPP). Acts in the terminal step of the DOXP/MEP pathway for isoprenoid precursor biosynthesis. In Yersinia pseudotuberculosis serotype IB (strain PB1/+), this protein is 4-hydroxy-3-methylbut-2-enyl diphosphate reductase.